The sequence spans 21 residues: Peptide PGLa-R4 (21 aa).

Leucine 21 carries the leucine amide modification.

Expressed by the skin glands.

The protein localises to the secreted. Antimicrobial peptide. This chain is Peptide PGLa-R4, found in Xenopus ruwenzoriensis (Uganda clawed frog).